A 449-amino-acid polypeptide reads, in one-letter code: HSPB1-associated protein 1 homolog (449 aa).

Residues 102–266 form the JmjC domain; it reads WAYADYKYIA…DEARVAEALT (165 aa). The span at 385–395 shows a compositional bias: basic and acidic residues; that stretch reads DQDKLRSDNKL. Residues 385–416 are disordered; sequence DQDKLRSDNKLGQRSGQSVLQDTENPGGSGEM. The span at 396–410 shows a compositional bias: polar residues; that stretch reads GQRSGQSVLQDTENP.

It localises to the cytoplasm. Its function is as follows. May play a role in cellular stress response. This chain is HSPB1-associated protein 1 homolog (hspbap1), found in Danio rerio (Zebrafish).